Consider the following 337-residue polypeptide: Anthraniloyl-CoA anthraniloyltransferase (337 aa).

Residues threonine 29 and phenylalanine 33 each coordinate anthraniloyl-CoA. The Acyl-thioester intermediate role is filled by cysteine 113. Residues 154–155 (RN), 221–224 (MRGR), and histidine 258 each bind anthraniloyl-CoA.

This sequence belongs to the thiolase-like superfamily. FabH family. In terms of assembly, homodimer.

It localises to the cytoplasm. The enzyme catalyses anthraniloyl-CoA + malonyl-CoA + H(+) = (2-aminobenzoyl)acetyl-CoA + CO2 + CoA. In terms of biological role, required for the biosynthesis of a number of signaling molecules, such as the quinolone signal 2-heptyl-3-hydroxy-4(1H)-quinolone (PQS), 2-heptyl-4-hydroxyquinoline (HHQ) and 2,4-dihydroxyquinoline (DHQ). These molecules are required for normal biofilm formation. Catalyzes the transfer of the anthraniloyl moiety from anthraniloyl-CoA to malonyl-CoA to form 2-aminobenzoylacetyl-CoA. The first step of the reaction is the formation of a covalent anthraniloyl-PqsD intermediate. Next, the short-lived intermediate 3-(2-aminophenyl)-3-oxopropanoyl-CoA is formed. An intramolecular rearrangement of this intermediate can give rise to 2,4-dihydroxyquinoline (DHQ). The chain is Anthraniloyl-CoA anthraniloyltransferase (pqsD) from Pseudomonas aeruginosa (strain ATCC 15692 / DSM 22644 / CIP 104116 / JCM 14847 / LMG 12228 / 1C / PRS 101 / PAO1).